Here is a 523-residue protein sequence, read N- to C-terminus: 2-hydroxyisoflavanone synthase (523 aa).

A helical transmembrane segment spans residues 2–22 (LVELAITLLVIALFIHLRPTL). Heme is bound at residue C450.

This sequence belongs to the cytochrome P450 family. It depends on heme as a cofactor.

It is found in the microsome membrane. It carries out the reaction (2S)-liquiritigenin + reduced [NADPH--hemoprotein reductase] + O2 = (2R,3S)-2,4',7-trihydroxyisoflavanone + oxidized [NADPH--hemoprotein reductase] + H2O + H(+). It catalyses the reaction (2S)-naringenin + reduced [NADPH--hemoprotein reductase] + O2 = 2-hydroxy-2,3-dihydrogenistein + oxidized [NADPH--hemoprotein reductase] + H2O + H(+). 2-hydroxyisoflavanone synthase, which catalyzes the hydroxylation associated with 1,2-aryl migration of flavanones. Converts liquiritigenin and naringenin into highly unstable precursors of the isoflavones daidzein and genistein. Acts only on substrates with (2S)-chirality. This Glycyrrhiza echinata (Licorice) protein is 2-hydroxyisoflavanone synthase (CYP93C2).